Reading from the N-terminus, the 1417-residue chain is Cytoadherence-linked asexual protein 3.1 (1417 aa).

The first 24 residues, M1–C24, serve as a signal peptide directing secretion. 4 disulfides stabilise this stretch: C333-C361, C407-C413, C517-C545, and C521-C542. The helical transmembrane segment at L1204 to F1224 threads the bilayer. The disordered stretch occupies residues T1383 to H1417. The span at D1394 to L1411 shows a compositional bias: acidic residues.

Self-associates. Component of the RhopH complex. RhopH complex is at least composed of CLAG3.1/CLAG3.2, RhopH2 and RhopH3 with a 1:1:1 subunit stoichiometry. CLAG3.1/CLAG3.2 mediates subunit association through independent contacts with RhopH2 and RhopH3, which do not directly interact with one another. Interacts with RhopH2. Interacts with RhopH3.

It is found in the host cell membrane. Its subcellular location is the host cytoplasm. It localises to the cytoplasmic vesicle. The protein resides in the secretory vesicle. The protein localises to the rhoptry. Functionally, participates in the formation of new permeability pathways in Plasmodium-infected erythrocytes enabling the uptake of nutrients from the blood plasma. The polypeptide is Cytoadherence-linked asexual protein 3.1 (Plasmodium falciparum (isolate 3D7)).